Consider the following 223-residue polypeptide: MKKAVCIMSGGMDSTLCAVMAKREGYEIIALHFDYEQRTMRREKMAFEQICDYLGIKKRLNLDVSFIADIGGNALTDKNLAVSKSGLGDEIPNTYVPFRNGIFISIAAALAEKEGAQAIYIGVVEEDSSGYPDCKGEFIERMNAAINVGTAPETKIKIVTPLVNLSKADIVAKSLEFGSPLELTWSCYEREDEACGLCDSCRLRLRGFERAGVKDKIKYANLS.

8–18 (MSGGMDSTLCA) contributes to the ATP binding site. Cysteine 187, cysteine 195, cysteine 198, and cysteine 201 together coordinate Zn(2+).

The protein belongs to the QueC family. Requires Zn(2+) as cofactor.

It carries out the reaction 7-carboxy-7-deazaguanine + NH4(+) + ATP = 7-cyano-7-deazaguanine + ADP + phosphate + H2O + H(+). It participates in purine metabolism; 7-cyano-7-deazaguanine biosynthesis. Catalyzes the ATP-dependent conversion of 7-carboxy-7-deazaguanine (CDG) to 7-cyano-7-deazaguanine (preQ(0)). This chain is 7-cyano-7-deazaguanine synthase, found in Campylobacter curvus (strain 525.92).